The following is a 178-amino-acid chain: Transcription factor E (178 aa).

The 85-residue stretch at 4–88 folds into the HTH TFE/IIEalpha-type domain; that stretch reads AEDLFINLAK…YWKPNIDQIN (85 aa).

It belongs to the TFE family. In terms of assembly, monomer. Interaction with RNA polymerase subunits RpoF and RpoE is necessary for Tfe stimulatory transcription activity. Able to interact with Tbp and RNA polymerase in the absence of DNA promoter. Interacts both with the preinitiation and elongation complexes.

Functionally, transcription factor that plays a role in the activation of archaeal genes transcribed by RNA polymerase. Facilitates transcription initiation by enhancing TATA-box recognition by TATA-box-binding protein (Tbp), and transcription factor B (Tfb) and RNA polymerase recruitment. Not absolutely required for transcription in vitro, but particularly important in cases where Tbp or Tfb function is not optimal. It dynamically alters the nucleic acid-binding properties of RNA polymerases by stabilizing the initiation complex and destabilizing elongation complexes. Seems to translocate with the RNA polymerase following initiation and acts by binding to the non template strand of the transcription bubble in elongation complexes. In Saccharolobus islandicus (strain L.S.2.15 / Lassen #1) (Sulfolobus islandicus), this protein is Transcription factor E.